The primary structure comprises 147 residues: Hemoglobin subunit delta (147 aa).

A Globin domain is found at 3 to 147 (HLTPDEKNAV…VATALAHKYH (145 aa)). Ser-51 bears the Phosphoserine mark. Positions 64 and 93 each coordinate heme b.

Belongs to the globin family. In terms of assembly, heterotetramer of two delta chains and two alpha chains. In terms of tissue distribution, red blood cells.

The polypeptide is Hemoglobin subunit delta (HBD) (Otolemur crassicaudatus (Brown greater galago)).